The sequence spans 309 residues: Mitochondrial brown fat uncoupling protein 1 (309 aa).

At 2 to 10 the chain is on the mitochondrial intermembrane side; that stretch reads VGHTESDVP. A helical membrane pass occupies residues 11 to 32; it reads PTMAVKIFSAGVAACVADIITF. Solcar repeat units follow at residues 11 to 106, 113 to 203, and 212 to 297; these read PTMA…VQEF, ASLG…MKEA, and DDVP…LKQE. Over 33-77 the chain is Mitochondrial matrix; the sequence is PLDTAKVRLQVGSAIQGECLISSAIRYKGVLGTIITLAKTEGPVK. A fatty acid 16:0-binding site is contributed by Lys60. The helical transmembrane segment at 78–100 threads the bilayer; that stretch reads LYSGLPAGLQRQISFASLRIGLY. The Mitochondrial intermembrane portion of the chain corresponds to 101-118; sequence DTVQEFFTTGKEASLGSK. Residues 119–135 traverse the membrane as a helical segment; it reads ISAGLMTGGVAVFIGQP. Residues 136–180 lie on the Mitochondrial matrix side of the membrane; sequence TEVVKVRLQAQSHLHGPKPRYTGTYNAYRIIATTEGLTGLWKGTT. Residues 181–197 traverse the membrane as a helical segment; sequence PNLTRNVIINCTELVTY. The Mitochondrial intermembrane segment spans residues 198 to 214; that stretch reads DLMKEALVKNKLLADDV. Residues 215 to 234 form a helical membrane-spanning segment; that stretch reads PCHFVSAVVAGFCTTVLSSP. Over 235 to 268 the chain is Mitochondrial matrix; that stretch reads VDVVKTRFVNSSPGQYTSVPNCAMMMLTREGPSA. Cys256 carries the cysteine sulfenic acid (-SOH) modification. The chain crosses the membrane as a helical span at residues 269-291; the sequence is FFKGFVPSFLRLGSWNIIMFVCF. Lys271 serves as a coordination point for fatty acid 16:0. Residues 292 to 309 lie on the Mitochondrial intermembrane side of the membrane; sequence EQLKQELMKSRHTMDCAT.

It belongs to the mitochondrial carrier (TC 2.A.29) family. Most probably functions as a monomer. Binds one purine nucleotide per monomer. However, has also been suggested to function as a homodimer or a homotetramer. Tightly associates with cardiolipin in the mitochondrion inner membrane; may stabilize and regulate its activity. May undergo sulfenylation upon cold exposure. May increase the sensitivity of UCP1 thermogenic function to the activation by noradrenaline probably through structural effects. In terms of processing, may undergo ubiquitin-mediated proteasomal degradation.

It is found in the mitochondrion inner membrane. It carries out the reaction H(+)(in) = H(+)(out). Has no constitutive proton transporter activity and has to be activated by long-chain fatty acids/LCFAs. Inhibited by purine nucleotides. Both purine nucleotides and LCFAs bind the cytosolic side of the transporter and directly compete to activate or inhibit it. Activated by noradrenaline and reactive oxygen species. Despite lacking canonical translational encoding for selenocysteine, a small pool of the protein has been observed to selectively incorporate selenocysteine at 'Cys-256'. Selenocysteine-modified protein is highly sensitive to redox modification and may constitute a pool of protein highly sensitive to activation by elevated levels of reactive oxygen species (ROS). Its function is as follows. Mitochondrial protein responsible for thermogenic respiration, a specialized capacity of brown adipose tissue and beige fat that participates in non-shivering adaptive thermogenesis to temperature and diet variations and more generally to the regulation of energy balance. Functions as a long-chain fatty acid/LCFA and proton symporter, simultaneously transporting one LCFA and one proton through the inner mitochondrial membrane. However, LCFAs remaining associated with the transporter via their hydrophobic tails, it results in an apparent transport of protons activated by LCFAs. Thereby, dissipates the mitochondrial proton gradient and converts the energy of substrate oxydation into heat instead of ATP. Regulates the production of reactive oxygen species/ROS by mitochondria. This chain is Mitochondrial brown fat uncoupling protein 1, found in Bos taurus (Bovine).